A 351-amino-acid chain; its full sequence is Renin receptor (351 aa).

Residues M1–G17 form the signal peptide. The Extracellular segment spans residues N18–E303. The chain crosses the membrane as a helical span at residues Y304–V324. Over T325–D351 the chain is Cytoplasmic. Residues K347–D351 carry the Mediates retrograde transport to the ER motif.

As to quaternary structure, interacts with renin. Accessory component of the multisubunit proton-transporting vacuolar (V)-ATPase protein pump. Interacts (via N-terminus) with ATP6AP1 (via N-terminus). Interacts with ATP6V0D1; ATP6V0D1 is a V-ATPase complex subunit and the interaction promotes V-ATPase complex assembly. Interacts with TMEM9; TMEM9 is a V-ATPase assembly regulator and the interaction induces the interaction with ATP6V0D1. Interacts with VMA21 (via N-terminus); VMA21 is a V-ATPase accessory component. In terms of processing, phosphorylated. Proteolytically cleaved by a furin-like convertase in the trans-Golgi network to generate N- and C-terminal fragments. Expressed in the brain.

Its subcellular location is the endoplasmic reticulum membrane. The protein resides in the lysosome membrane. It is found in the cytoplasmic vesicle. It localises to the autophagosome membrane. The protein localises to the cell projection. Its subcellular location is the dendritic spine membrane. The protein resides in the axon. It is found in the endosome membrane. It localises to the clathrin-coated vesicle membrane. The protein localises to the secretory vesicle. Its subcellular location is the synaptic vesicle membrane. Multifunctional protein which functions as a renin, prorenin cellular receptor and is involved in the assembly of the lysosomal proton-transporting V-type ATPase (V-ATPase) and the acidification of the endo-lysosomal system. May mediate renin-dependent cellular responses by activating ERK1 and ERK2. By increasing the catalytic efficiency of renin in AGT/angiotensinogen conversion to angiotensin I, may also play a role in the renin-angiotensin system (RAS). Through its function in V-type ATPase (v-ATPase) assembly and acidification of the lysosome it regulates protein degradation and may control different signaling pathways important for proper brain development, synapse morphology and synaptic transmission. This Bos taurus (Bovine) protein is Renin receptor (ATP6AP2).